Consider the following 204-residue polypeptide: Urease accessory protein UreG (204 aa).

11 to 18 (GPVGAGKT) is a GTP binding site.

Belongs to the SIMIBI class G3E GTPase family. UreG subfamily. In terms of assembly, homodimer. UreD, UreF and UreG form a complex that acts as a GTP-hydrolysis-dependent molecular chaperone, activating the urease apoprotein by helping to assemble the nickel containing metallocenter of UreC. The UreE protein probably delivers the nickel.

It is found in the cytoplasm. Its function is as follows. Facilitates the functional incorporation of the urease nickel metallocenter. This process requires GTP hydrolysis, probably effectuated by UreG. The protein is Urease accessory protein UreG of Staphylococcus epidermidis (strain ATCC 35984 / DSM 28319 / BCRC 17069 / CCUG 31568 / BM 3577 / RP62A).